We begin with the raw amino-acid sequence, 519 residues long: 2,3-bisphosphoglycerate-independent phosphoglycerate mutase (519 aa).

Positions 18 and 68 each coordinate Mn(2+). Residue Ser-68 is the Phosphoserine intermediate of the active site. Substrate-binding positions include His-129, 159–160 (RD), Arg-191, Arg-197, 267–270 (RADR), and Lys-341. Residues Asp-408, His-412, Asp-449, His-450, and His-468 each contribute to the Mn(2+) site.

Belongs to the BPG-independent phosphoglycerate mutase family. Monomer. Mn(2+) is required as a cofactor.

It catalyses the reaction (2R)-2-phosphoglycerate = (2R)-3-phosphoglycerate. Its pathway is carbohydrate degradation; glycolysis; pyruvate from D-glyceraldehyde 3-phosphate: step 3/5. Its function is as follows. Catalyzes the interconversion of 2-phosphoglycerate and 3-phosphoglycerate. This Coxiella burnetii (strain Dugway 5J108-111) protein is 2,3-bisphosphoglycerate-independent phosphoglycerate mutase.